We begin with the raw amino-acid sequence, 657 residues long: Regulator of MON1-CCZ1 complex (657 aa).

The Mic1 domain maps to 471-637 (KKEMPHKFVI…NFTPGEHCEE (167 aa)).

The protein belongs to the RMC1 family. As to quaternary structure, found in a complex with RMC1, CCZ1 MON1A and MON1B.

Its subcellular location is the lysosome membrane. It is found in the late endosome membrane. Its function is as follows. Component of the CCZ1-MON1 RAB7A guanine exchange factor (GEF). Acts as a positive regulator of CCZ1-MON1A/B function necessary for endosomal/autophagic flux and efficient RAB7A localization. This Homo sapiens (Human) protein is Regulator of MON1-CCZ1 complex.